Here is a 649-residue protein sequence, read N- to C-terminus: tRNA-guanine(15) transglycosylase (649 aa).

Asp-88 (nucleophile) is an active-site residue. Substrate-binding residues include Asp-123 and Ala-194. Residues Cys-280, Cys-282, and Cys-285 each coordinate Zn(2+). Positions 573-648 constitute a PUA domain; it reads KYRIVIDSSV…VAATLRGGLK (76 aa).

This sequence belongs to the archaeosine tRNA-ribosyltransferase family. The cofactor is Zn(2+).

The enzyme catalyses guanosine(15) in tRNA + 7-cyano-7-deazaguanine = 7-cyano-7-carbaguanosine(15) in tRNA + guanine. The protein operates within tRNA modification; archaeosine-tRNA biosynthesis. Exchanges the guanine residue with 7-cyano-7-deazaguanine (preQ0) at position 15 in the dihydrouridine loop (D-loop) of archaeal tRNAs. This chain is tRNA-guanine(15) transglycosylase, found in Methanococcus maripaludis (strain C6 / ATCC BAA-1332).